Reading from the N-terminus, the 287-residue chain is 4-hydroxybenzoate octaprenyltransferase (287 aa).

9 helical membrane-spanning segments follow: residues Ile-20 to Leu-40, Met-43 to Ile-63, Leu-94 to Leu-114, Thr-115 to Tyr-135, His-137 to Ala-157, Ala-159 to Ala-179, Ile-210 to Leu-230, Ile-235 to Gly-255, and Phe-266 to Met-286.

The protein belongs to the UbiA prenyltransferase family. Mg(2+) is required as a cofactor.

The protein resides in the cell inner membrane. The enzyme catalyses all-trans-octaprenyl diphosphate + 4-hydroxybenzoate = 4-hydroxy-3-(all-trans-octaprenyl)benzoate + diphosphate. The protein operates within cofactor biosynthesis; ubiquinone biosynthesis. In terms of biological role, catalyzes the prenylation of para-hydroxybenzoate (PHB) with an all-trans polyprenyl group. Mediates the second step in the final reaction sequence of ubiquinone-8 (UQ-8) biosynthesis, which is the condensation of the polyisoprenoid side chain with PHB, generating the first membrane-bound Q intermediate 3-octaprenyl-4-hydroxybenzoate. The sequence is that of 4-hydroxybenzoate octaprenyltransferase from Photobacterium profundum (strain SS9).